A 1250-amino-acid chain; its full sequence is TBC1 domain family member 9B (1250 aa).

GRAM domains follow at residues 142–209 (LKMR…EKNA) and 288–356 (ECYR…EKAD). Thr397 is subject to Phosphothreonine. Residues 397–443 (TPSKQPGSIGSRKASVVDPSTESSPAPQEGSEQPASPASPLSSRQSF) are disordered. A phosphoserine mark is found at Ser411, Ser432, Ser435, and Ser463. Over residues 414 to 443 (DPSTESSPAPQEGSEQPASPASPLSSRQSF) the composition is skewed to polar residues. A Rab-GAP TBC domain is found at 508–695 (GIPESLRGEL…VIVDCFFYEG (188 aa)). Residues 668–688 (LSWFLTLFLSVMPFESAVVIV) form a helical membrane-spanning segment. The EF-hand domain maps to 879-914 (HTPLLAGRMFRLLDENKDSLINFKEFVTGMSGMYHG). Disordered regions lie at residues 974-999 (LPQE…PDYR), 1069-1093 (SART…ELHQ), and 1128-1157 (VEGG…MSSY). Positions 984–999 (SEERGEEKGTSSPDYR) are enriched in basic and acidic residues. Residue Ser1241 is modified to Phosphoserine.

The protein resides in the membrane. May act as a GTPase-activating protein for Rab family protein(s). In Homo sapiens (Human), this protein is TBC1 domain family member 9B (TBC1D9B).